The chain runs to 111 residues: Cytochrome bo(3) ubiquinol oxidase subunit 4 (111 aa).

The Cytoplasmic portion of the chain corresponds to 1 to 17 (MSSAAHDNHGAGHGSLG). A helical transmembrane segment spans residues 18–38 (SYAIGFVLSVILTAIPFYMVM). The Periplasmic portion of the chain corresponds to 39–46 (DGGFSRHA). The helical transmembrane segment at 47–67 (TILTMVVLGLVQVVVHLICFL) threads the bilayer. At 68-80 (HMNMSSEGRWNVM) the chain is on the cytoplasmic side. A helical membrane pass occupies residues 81-101 (AFIFTVIVILLVVGLSLWIIF). Residues 102–111 (SADMLMMPMP) are Periplasmic-facing.

The protein belongs to the cytochrome c oxidase bacterial subunit 4 family. In terms of assembly, heterooctamer of two A chains, two B chains, two C chains and two D chains.

The protein resides in the cell inner membrane. Cytochrome bo(3) ubiquinol terminal oxidase is the component of the aerobic respiratory chain of E.coli that predominates when cells are grown at high aeration. Has proton pump activity across the membrane in addition to electron transfer, pumping 2 protons/electron. In Pseudomonas aeruginosa (strain ATCC 15692 / DSM 22644 / CIP 104116 / JCM 14847 / LMG 12228 / 1C / PRS 101 / PAO1), this protein is Cytochrome bo(3) ubiquinol oxidase subunit 4 (cyoD).